The following is a 161-amino-acid chain: Nucleotide-binding protein Vapar_3769 (161 aa).

The protein belongs to the YajQ family.

Its function is as follows. Nucleotide-binding protein. The protein is Nucleotide-binding protein Vapar_3769 of Variovorax paradoxus (strain S110).